The following is a 435-amino-acid chain: Xylose isomerase (435 aa).

The Mg(2+) site is built by aspartate 306 and aspartate 308.

It belongs to the xylose isomerase family. Homotetramer. Requires Mg(2+) as cofactor.

The protein localises to the cytoplasm. The enzyme catalyses alpha-D-xylose = alpha-D-xylulofuranose. The sequence is that of Xylose isomerase from Allorhizobium ampelinum (strain ATCC BAA-846 / DSM 112012 / S4) (Agrobacterium vitis (strain S4)).